Here is a 466-residue protein sequence, read N- to C-terminus: MTKSVAIIGAGITGLSSAYFLKQQDPNIDVTIFEASNRPGGKIQSYRKDGYMIELGPESYLGRKTIMTELAKDIGLEQDIVTNTTGQSYIFAKNKLYPIPGGSIMGIPTDIKPFVTTKLISPLGKLRAGFDLLKKPTQMQDGDISVGAFFRARLGNEVLENLIEPLMGGIYGTDIDKLSLMSTFPNFKEKEEAFGSLIKGMKDEKNKRLKQRQLYPGAPKGQFKQFKHGLSSFIEALEQDVKNKGVTIRYNTSVDDIITSQKQYKIVYNDQLEEVYDGVLVTTPHQVFLNWFGQDPAFDYFKTMDSTTVATVVLAFDEKDIENTHDGTGFVIARTSDTDITACTWTSKKWPFTTPEGKVLIRAYVGKPGDTVVDDHTDNELVSIVRRDLSQMMTFKGDPEFTIVNRLPKSMPQYHVGHIQQIRQIQAHIKQTYPRLRVTGASFEAVGLPDCITQGKVAAEEVIAEL.

FAD contacts are provided by residues glycine 9–glycine 14, glutamate 34–alanine 35, lysine 42, glycine 56–serine 59, valine 254, and valine 446–leucine 448.

The protein belongs to the protoporphyrinogen/coproporphyrinogen oxidase family. Coproporphyrinogen III oxidase subfamily. Requires FAD as cofactor.

The protein resides in the cytoplasm. The catalysed reaction is coproporphyrinogen III + 3 O2 = coproporphyrin III + 3 H2O2. Its pathway is porphyrin-containing compound metabolism; protoheme biosynthesis. Its activity is regulated as follows. The generation of protoporphyrin IX, but not coproporphyrin III, is stimulated by heme-bound HemQ. This stimulatory effect is mediated by superoxide. Inhibited by acifluorfen analogs. Its function is as follows. Involved in coproporphyrin-dependent heme b biosynthesis. Catalyzes the oxidation of coproporphyrinogen III to coproporphyrin III. Can also oxidize protoporphyrinogen IX. The sequence is that of Coproporphyrinogen III oxidase from Staphylococcus aureus (strain NCTC 8325 / PS 47).